A 955-amino-acid chain; its full sequence is Leucine--tRNA ligase (955 aa).

A 'HIGH' region motif is present at residues 51–61; sequence PYLNGVLHAGH. A 'KMSKS' region motif is present at residues 647-651; it reads KLSKS. Residue K650 coordinates ATP.

This sequence belongs to the class-I aminoacyl-tRNA synthetase family.

The protein resides in the cytoplasm. The enzyme catalyses tRNA(Leu) + L-leucine + ATP = L-leucyl-tRNA(Leu) + AMP + diphosphate. This chain is Leucine--tRNA ligase, found in Methanococcus maripaludis (strain C5 / ATCC BAA-1333).